The following is a 199-amino-acid chain: Acireductone dioxygenase 1 (199 aa).

The Fe(2+) site is built by His99, His101, Glu105, and His144. Ni(2+)-binding residues include His99, His101, Glu105, and His144.

This sequence belongs to the acireductone dioxygenase (ARD) family. The cofactor is Fe(2+). Ni(2+) is required as a cofactor.

It localises to the cytoplasm. The protein localises to the nucleus. The enzyme catalyses 1,2-dihydroxy-5-(methylsulfanyl)pent-1-en-3-one + O2 = 4-methylsulfanyl-2-oxobutanoate + formate + 2 H(+). The catalysed reaction is 1,2-dihydroxy-5-(methylsulfanyl)pent-1-en-3-one + O2 = 3-(methylsulfanyl)propanoate + CO + formate + 2 H(+). It participates in amino-acid biosynthesis; L-methionine biosynthesis via salvage pathway; L-methionine from S-methyl-5-thio-alpha-D-ribose 1-phosphate: step 5/6. In terms of biological role, catalyzes 2 different reactions between oxygen and the acireductone 1,2-dihydroxy-3-keto-5-methylthiopentene (DHK-MTPene) depending upon the metal bound in the active site. Fe-containing acireductone dioxygenase (Fe-ARD) produces formate and 2-keto-4-methylthiobutyrate (KMTB), the alpha-ketoacid precursor of methionine in the methionine recycle pathway. Ni-containing acireductone dioxygenase (Ni-ARD) produces methylthiopropionate, carbon monoxide and formate, and does not lie on the methionine recycle pathway. This chain is Acireductone dioxygenase 1 (ARD1), found in Oryza sativa subsp. indica (Rice).